Here is a 244-residue protein sequence, read N- to C-terminus: Probable phosphatase CA_C0509 (244 aa).

Zn(2+)-binding residues include His-8, His-10, His-16, His-41, Glu-74, His-102, His-132, Asp-193, and His-195.

This sequence belongs to the PHP family. Zn(2+) is required as a cofactor.

The sequence is that of Probable phosphatase CA_C0509 from Clostridium acetobutylicum (strain ATCC 824 / DSM 792 / JCM 1419 / IAM 19013 / LMG 5710 / NBRC 13948 / NRRL B-527 / VKM B-1787 / 2291 / W).